We begin with the raw amino-acid sequence, 338 residues long: Solute carrier family 35 member G6 (338 aa).

The segment at methionine 1 to leucine 25 is disordered. Helical transmembrane passes span leucine 40–methionine 60, leucine 67–leucine 87, tyrosine 105–valine 125, cysteine 160–leucine 180, alanine 190–tyrosine 210, threonine 221–leucine 241, cysteine 255–threonine 275, leucine 281–leucine 301, and isoleucine 310–cysteine 330. Residues leucine 49 to glycine 174 enclose the EamA 1 domain. The EamA 2 domain occupies tyrosine 272 to alanine 325.

It belongs to the SLC35G solute transporter family. As to expression, expressed in placenta and testis.

The protein resides in the membrane. This is Solute carrier family 35 member G6 (SLC35G6) from Homo sapiens (Human).